A 310-amino-acid chain; its full sequence is tRNA dimethylallyltransferase (310 aa).

ATP is bound at residue Gly10–Ser17. A substrate-binding site is contributed by Thr12–Ser17. The interval Asp35–Gln38 is interaction with substrate tRNA.

Belongs to the IPP transferase family. As to quaternary structure, monomer. The cofactor is Mg(2+).

It carries out the reaction adenosine(37) in tRNA + dimethylallyl diphosphate = N(6)-dimethylallyladenosine(37) in tRNA + diphosphate. Its function is as follows. Catalyzes the transfer of a dimethylallyl group onto the adenine at position 37 in tRNAs that read codons beginning with uridine, leading to the formation of N6-(dimethylallyl)adenosine (i(6)A). This chain is tRNA dimethylallyltransferase, found in Clostridium perfringens (strain 13 / Type A).